The chain runs to 314 residues: 4-hydroxy-3-methylbut-2-enyl diphosphate reductase (314 aa).

Cys12 contributes to the [4Fe-4S] cluster binding site. (2E)-4-hydroxy-3-methylbut-2-enyl diphosphate is bound by residues His41 and His74. Dimethylallyl diphosphate-binding residues include His41 and His74. Residues His41 and His74 each coordinate isopentenyl diphosphate. Residue Cys96 coordinates [4Fe-4S] cluster. Position 124 (His124) interacts with (2E)-4-hydroxy-3-methylbut-2-enyl diphosphate. Dimethylallyl diphosphate is bound at residue His124. His124 contacts isopentenyl diphosphate. The active-site Proton donor is Glu126. Thr167 is a binding site for (2E)-4-hydroxy-3-methylbut-2-enyl diphosphate. [4Fe-4S] cluster is bound at residue Cys197. Ser225, Ser226, Asn227, and Ser269 together coordinate (2E)-4-hydroxy-3-methylbut-2-enyl diphosphate. Residues Ser225, Ser226, Asn227, and Ser269 each contribute to the dimethylallyl diphosphate site. Isopentenyl diphosphate is bound by residues Ser225, Ser226, Asn227, and Ser269.

It belongs to the IspH family. The cofactor is [4Fe-4S] cluster.

The catalysed reaction is isopentenyl diphosphate + 2 oxidized [2Fe-2S]-[ferredoxin] + H2O = (2E)-4-hydroxy-3-methylbut-2-enyl diphosphate + 2 reduced [2Fe-2S]-[ferredoxin] + 2 H(+). It catalyses the reaction dimethylallyl diphosphate + 2 oxidized [2Fe-2S]-[ferredoxin] + H2O = (2E)-4-hydroxy-3-methylbut-2-enyl diphosphate + 2 reduced [2Fe-2S]-[ferredoxin] + 2 H(+). Its pathway is isoprenoid biosynthesis; dimethylallyl diphosphate biosynthesis; dimethylallyl diphosphate from (2E)-4-hydroxy-3-methylbutenyl diphosphate: step 1/1. It functions in the pathway isoprenoid biosynthesis; isopentenyl diphosphate biosynthesis via DXP pathway; isopentenyl diphosphate from 1-deoxy-D-xylulose 5-phosphate: step 6/6. Its function is as follows. Catalyzes the conversion of 1-hydroxy-2-methyl-2-(E)-butenyl 4-diphosphate (HMBPP) into a mixture of isopentenyl diphosphate (IPP) and dimethylallyl diphosphate (DMAPP). Acts in the terminal step of the DOXP/MEP pathway for isoprenoid precursor biosynthesis. In Histophilus somni (strain 2336) (Haemophilus somnus), this protein is 4-hydroxy-3-methylbut-2-enyl diphosphate reductase.